Consider the following 235-residue polypeptide: Small ribosomal subunit protein uS3 (235 aa).

The KH type-2 domain occupies V39–K107. The segment at A215–K235 is disordered.

It belongs to the universal ribosomal protein uS3 family. Part of the 30S ribosomal subunit. Forms a tight complex with proteins S10 and S14.

In terms of biological role, binds the lower part of the 30S subunit head. Binds mRNA in the 70S ribosome, positioning it for translation. In Haemophilus influenzae (strain ATCC 51907 / DSM 11121 / KW20 / Rd), this protein is Small ribosomal subunit protein uS3.